The chain runs to 141 residues: Large-conductance mechanosensitive channel (141 aa).

Helical transmembrane passes span 17–37 (MDLAVGVIIGAAFSKIVASIV), 40–60 (LIMPIVGAVFGGFDFSNLFIA), and 86–106 (GNFVTVLLNFLILALIVFIIV).

Belongs to the MscL family. In terms of assembly, homopentamer.

Its subcellular location is the cell inner membrane. Its function is as follows. Channel that opens in response to stretch forces in the membrane lipid bilayer. May participate in the regulation of osmotic pressure changes within the cell. In Thiobacillus denitrificans (strain ATCC 25259 / T1), this protein is Large-conductance mechanosensitive channel.